The sequence spans 60 residues: Mastoparan-VT1 (60 aa).

An N-terminal signal peptide occupies residues 1 to 25 (MKNTILILFTAFIALLGFFGMSAEA). Positions 26 to 45 (LADLKADPLAGPNPDADPEA) are excised as a propeptide. AXPX repeat units lie at residues 31 to 34 (ADPL), 35 to 38 (AGPN), and 41 to 44 (ADPE). L59 is subject to Leucine amide.

Belongs to the MCD family. Mastoparan subfamily. Expressed by the venom gland.

The protein resides in the secreted. Its function is as follows. Antimicrobial peptide with activities against Gram-negative and Gram-positive bacteria and the fungi C.albicans and C.parapsilosis. Exhibits little hemolytic activity against washed human erythrocytes. Also acts as a mast cell degranulating peptide. Its mast cell degranulation activity may be related to the activation of G-protein coupled receptors in mast cells as well as interaction with other proteins located in cell endosomal membranes in the mast cells. In terms of biological role, antimicrobial peptide with activities against Gram-negative and Gram-positive bacteria and the fungi C.albicans and C.parapsilosis. Exhibits little hemolytic activity against washed human erythrocytes. Also acts as a mast cell degranulating peptide. This is Mastoparan-VT1 from Vespa tropica (Greater banded hornet).